The primary structure comprises 91 residues: Small ribosomal subunit protein uS19 (91 aa).

It belongs to the universal ribosomal protein uS19 family.

In terms of biological role, protein S19 forms a complex with S13 that binds strongly to the 16S ribosomal RNA. The polypeptide is Small ribosomal subunit protein uS19 (Trichodesmium erythraeum (strain IMS101)).